Reading from the N-terminus, the 194-residue chain is MKYEISEQAKLPTRFGNFFTKSFREYGKNNTLFEHLVVFTHTLGETPLVRIHSECLTGDVFGSKKCDCGNELALAMEQIAHNTEGGMLIYLRQEGRGIGLFNKINAYALQDKGYDTVEANQQLGFAGDMRSYEIVGEIFKHFHITHINLLTNNPRKIDALAPYAKVVRHSIITPSNPHNQAYLEVKKQKLGHLL.

Residue 50–54 (RIHSE) coordinates GTP. Zn(2+)-binding residues include C55, C66, and C68. GTP is bound by residues 94 to 96 (EGR) and T116. Catalysis depends on D128, which acts as the Proton acceptor. The Nucleophile role is filled by R130. GTP contacts are provided by T151 and K156.

It belongs to the GTP cyclohydrolase II family. It depends on Zn(2+) as a cofactor.

It catalyses the reaction GTP + 4 H2O = 2,5-diamino-6-hydroxy-4-(5-phosphoribosylamino)-pyrimidine + formate + 2 phosphate + 3 H(+). Its pathway is cofactor biosynthesis; riboflavin biosynthesis; 5-amino-6-(D-ribitylamino)uracil from GTP: step 1/4. Functionally, catalyzes the conversion of GTP to 2,5-diamino-6-ribosylamino-4(3H)-pyrimidinone 5'-phosphate (DARP), formate and pyrophosphate. This is GTP cyclohydrolase-2 from Helicobacter hepaticus (strain ATCC 51449 / 3B1).